We begin with the raw amino-acid sequence, 182 residues long: NADH-quinone oxidoreductase subunit B 2 (182 aa).

[4Fe-4S] cluster is bound by residues Cys-57, Cys-58, Cys-123, and Cys-153.

This sequence belongs to the complex I 20 kDa subunit family. NDH-1 is composed of 14 different subunits. Subunits NuoB, C, D, E, F, and G constitute the peripheral sector of the complex. It depends on [4Fe-4S] cluster as a cofactor.

It localises to the cell membrane. It carries out the reaction a quinone + NADH + 5 H(+)(in) = a quinol + NAD(+) + 4 H(+)(out). Its function is as follows. NDH-1 shuttles electrons from NADH, via FMN and iron-sulfur (Fe-S) centers, to quinones in the respiratory chain. The immediate electron acceptor for the enzyme in this species is believed to be a menaquinone. Couples the redox reaction to proton translocation (for every two electrons transferred, four hydrogen ions are translocated across the cytoplasmic membrane), and thus conserves the redox energy in a proton gradient. The polypeptide is NADH-quinone oxidoreductase subunit B 2 (Symbiobacterium thermophilum (strain DSM 24528 / JCM 14929 / IAM 14863 / T)).